The primary structure comprises 81 residues: Large ribosomal subunit protein uL23 (81 aa).

Belongs to the universal ribosomal protein uL23 family. Part of the 50S ribosomal subunit. Contacts protein L29.

Binds to 23S rRNA. One of the proteins that surrounds the polypeptide exit tunnel on the outside of the ribosome. The polypeptide is Large ribosomal subunit protein uL23 (Saccharolobus solfataricus (strain ATCC 35092 / DSM 1617 / JCM 11322 / P2) (Sulfolobus solfataricus)).